Here is an 84-residue protein sequence, read N- to C-terminus: Putative membrane protein insertion efficiency factor (84 aa).

The segment at 63-84 (WGGSGYDPVPGADPEHDRRPRG) is disordered. The span at 75-84 (DPEHDRRPRG) shows a compositional bias: basic and acidic residues.

It belongs to the UPF0161 family.

It is found in the cell inner membrane. Functionally, could be involved in insertion of integral membrane proteins into the membrane. The polypeptide is Putative membrane protein insertion efficiency factor (Cereibacter sphaeroides (strain ATCC 17025 / ATH 2.4.3) (Rhodobacter sphaeroides)).